A 638-amino-acid chain; its full sequence is MGNGMCSRRQKRIFQALACLAVAIGFVYGAMLNYHLQNDLKKAEAVALKYQQHHESMSAQLQVVYEHRSRLEKSLQKERLEHKKAKEDFLVYKLEAQETLNKGRQDSNNRYNALGVQHEMLKSQHEELRKQHNELQGEHQKLGEDLTRTYSNHKEKYLLLQQEKEQEHSKLKESIYNLREENKQLRKAHQDVHLQLQDVKSQVEEYVQLKKALNKMSSLRQPEKDTVPIGRNNSPTIAPTQEHATEQELMTNVQTRQVVDHDIIIRSSTAANDEAVHLNRVKTNLDKPDEDTVPLPEAEAATEHPVEVEEEHKKELEEEEMEQVGKPERLVEEQDQVQEEQEQHKPEEDDALEGNNEEQKEEETNNMQGNKHTERDPTLKPHSKYKSAYEEQLEQQQLAARQMEEARHLKEQQDLLHQQRLKEHILRQQQLHENDIELQRQNKYKEEQLAEKLRKQAEYENVDHDIVQGEEEQPIQQEEAAYERDNHQDEAEDVDAANNANEEQALDQEAESREGQEKAAAEDVNPADDPNNQGEDEFEEAEQEREENLPDENEAQRQQQEHPEVQEHLAMAGNPDQQEDNIDQQYQEEEEEERQIGAEREPDAQQEENKERNEENYEEEEEEEDGAAGVKNKRRAEM.

At 1–12 the chain is on the cytoplasmic side; the sequence is MGNGMCSRRQKR. Residues 13–33 form a helical; Signal-anchor for type II membrane protein membrane-spanning segment; the sequence is IFQALACLAVAIGFVYGAMLN. Residues 34-638 lie on the Lumenal side of the membrane; that stretch reads YHLQNDLKKA…GVKNKRRAEM (605 aa). Golgi targeting regions lie at residues 38 to 107 and 176 to 220; these read NDLK…RQDS and YNLR…SSLR. Residues 66-216 adopt a coiled-coil conformation; sequence EHRSRLEKSL…VQLKKALNKM (151 aa). An endosome targeting region spans residues 80–175; sequence LEHKKAKEDF…QEHSKLKESI (96 aa). 3 disordered regions span residues 217–245, 280–415, and 455–638; these read SSLR…EHAT, RVKT…QQDL, and KQAE…RAEM. Basic and acidic residues-rich tracts occupy residues 301–316 and 323–332; these read ATEH…KKEL and QVGKPERLVE. The segment covering 348-361 has biased composition (acidic residues); that stretch reads EDDALEGNNEEQKE. 3 stretches are compositionally biased toward basic and acidic residues: residues 402–414, 455–467, and 510–521; these read QMEE…EQQD, KQAE…HDIV, and AESREGQEKAAA. 2 stretches are compositionally biased toward acidic residues: residues 534–553 and 577–593; these read GEDE…PDEN and QQED…EEEE. Positions 594–615 are enriched in basic and acidic residues; sequence RQIGAEREPDAQQEENKERNEE. Positions 616–626 are enriched in acidic residues; sequence NYEEEEEEEDG.

Belongs to the GOLIM4 family.

The protein resides in the golgi apparatus. It is found in the golgi stack membrane. The protein localises to the endosome membrane. Functionally, may play a role in endosome to Golgi protein trafficking. The chain is Golgi integral membrane protein 4 (golim4) from Xenopus tropicalis (Western clawed frog).